The primary structure comprises 1051 residues: Kinesin-like protein KIN-4B (1051 aa).

The segment at 1-21 (MESHSSLSSSSSSSPPSSLSS) is disordered. The Kinesin motor domain maps to 25 to 380 (CVKVAVNVRP…LKYANRARNI (356 aa)). 104–111 (GQTGSGKT) is a binding site for ATP. Coiled coils occupy residues 414-448 (ATSSEEVQVMREKIMKLESANEELSRELHIYRSKR) and 540-644 (RQHF…KMKQ). The span at 916–925 (SSSYSGSSRS) shows a compositional bias: low complexity. Disordered stretches follow at residues 916–946 (SSSYSGSSRSSSKHYGDNNASDDPSSPSSTY) and 1029–1051 (MSKSHHDDEDDHSWNRHSMFQGA).

It belongs to the TRAFAC class myosin-kinesin ATPase superfamily. Kinesin family. KIN-4 subfamily. In terms of assembly, homodimer.

Functionally, kinesin-like motor protein involved in the control of the oriented deposition of cellulose microfibrils. The polypeptide is Kinesin-like protein KIN-4B (Arabidopsis thaliana (Mouse-ear cress)).